A 147-amino-acid chain; its full sequence is Large ribosomal subunit protein bL9 (147 aa).

It belongs to the bacterial ribosomal protein bL9 family.

Its function is as follows. Binds to the 23S rRNA. This Mycoplasmoides gallisepticum (strain R(low / passage 15 / clone 2)) (Mycoplasma gallisepticum) protein is Large ribosomal subunit protein bL9.